The following is a 537-amino-acid chain: Eukaryotic translation initiation factor 3 subunit L (537 aa).

Residues 301–513 (TFSSILLYIQ…IHIADTKVSH (213 aa)) enclose the PCI domain.

Belongs to the eIF-3 subunit L family. As to quaternary structure, component of the eukaryotic translation initiation factor 3 (eIF-3) complex.

Its subcellular location is the cytoplasm. Component of the eukaryotic translation initiation factor 3 (eIF-3) complex, which is involved in protein synthesis of a specialized repertoire of mRNAs and, together with other initiation factors, stimulates binding of mRNA and methionyl-tRNAi to the 40S ribosome. The eIF-3 complex specifically targets and initiates translation of a subset of mRNAs involved in cell proliferation. This is Eukaryotic translation initiation factor 3 subunit L from Aedes aegypti (Yellowfever mosquito).